The sequence spans 1117 residues: PR domain zinc finger protein 10 (1117 aa).

The segment at glutamine 97–phenylalanine 142 is disordered. Acidic residues predominate over residues lysine 107–proline 136. Residues leucine 182 to alanine 300 form the SET domain. Residues isoleucine 201–glutamate 305 form an N-terminal PR domain; essential for transcriptional activator activity region. The segment at tryptophan 329–histidine 351 adopts a C2H2-type 1 zinc-finger fold. A Glycyl lysine isopeptide (Lys-Gly) (interchain with G-Cter in SUMO2) cross-link involves residue lysine 354. Residues threonine 361 to arginine 381 are compositionally biased toward basic residues. The segment at threonine 361–isoleucine 386 is disordered. At serine 398 the chain carries Phosphoserine. Phosphothreonine is present on threonine 402. A disordered region spans residues glutamine 440–alanine 474. Basic and acidic residues predominate over residues leucine 446–serine 464. 9 C2H2-type zinc fingers span residues phenylalanine 500–histidine 522, leucine 530–histidine 552, tyrosine 558–histidine 580, phenylalanine 586–histidine 609, tyrosine 614–histidine 636, phenylalanine 642–histidine 665, phenylalanine 697–histidine 720, tyrosine 742–histidine 765, and valine 804–histidine 827. Residues glutamine 871–glutamine 1097 form a C-terminal glutamine-rich region; essential for transcriptional activator activity region. Disordered stretches follow at residues valine 919–proline 943, glycine 958–glutamine 1001, and glutamine 1066–glutamine 1094. Polar residues predominate over residues serine 924–aspartate 934.

The protein belongs to the class V-like SAM-binding methyltransferase superfamily.

It is found in the nucleus. In terms of biological role, transcriptional activator, essential for early embryonic development and survival of embryonic stem cells (ESCs). Supports cell growth and survival during early development by transcriptionally activating the expression of the translation initiation factor EIF3B, to sustain global translation. Activates the transcription of FLNC. The polypeptide is PR domain zinc finger protein 10 (PRDM10) (Pongo abelii (Sumatran orangutan)).